The following is a 170-amino-acid chain: Adenine phosphoribosyltransferase (170 aa).

It belongs to the purine/pyrimidine phosphoribosyltransferase family. Homodimer.

The protein localises to the cytoplasm. The catalysed reaction is AMP + diphosphate = 5-phospho-alpha-D-ribose 1-diphosphate + adenine. Its pathway is purine metabolism; AMP biosynthesis via salvage pathway; AMP from adenine: step 1/1. Catalyzes a salvage reaction resulting in the formation of AMP, that is energically less costly than de novo synthesis. This chain is Adenine phosphoribosyltransferase, found in Mycoplasmopsis agalactiae (strain NCTC 10123 / CIP 59.7 / PG2) (Mycoplasma agalactiae).